A 210-amino-acid chain; its full sequence is Methylthioribulose-1-phosphate dehydratase (210 aa).

Zn(2+)-binding residues include His94 and His96.

This sequence belongs to the aldolase class II family. MtnB subfamily. Zn(2+) serves as cofactor.

The catalysed reaction is 5-(methylsulfanyl)-D-ribulose 1-phosphate = 5-methylsulfanyl-2,3-dioxopentyl phosphate + H2O. It functions in the pathway amino-acid biosynthesis; L-methionine biosynthesis via salvage pathway; L-methionine from S-methyl-5-thio-alpha-D-ribose 1-phosphate: step 2/6. Its function is as follows. Catalyzes the dehydration of methylthioribulose-1-phosphate (MTRu-1-P) into 2,3-diketo-5-methylthiopentyl-1-phosphate (DK-MTP-1-P). This chain is Methylthioribulose-1-phosphate dehydratase, found in Yersinia enterocolitica serotype O:8 / biotype 1B (strain NCTC 13174 / 8081).